The sequence spans 159 residues: Ribosomal RNA large subunit methyltransferase H (159 aa).

S-adenosyl-L-methionine is bound by residues L76, G108, and 127–132 (FGQLTL).

The protein belongs to the RNA methyltransferase RlmH family. As to quaternary structure, homodimer.

The protein localises to the cytoplasm. The catalysed reaction is pseudouridine(1915) in 23S rRNA + S-adenosyl-L-methionine = N(3)-methylpseudouridine(1915) in 23S rRNA + S-adenosyl-L-homocysteine + H(+). In terms of biological role, specifically methylates the pseudouridine at position 1915 (m3Psi1915) in 23S rRNA. The sequence is that of Ribosomal RNA large subunit methyltransferase H from Streptococcus gordonii (strain Challis / ATCC 35105 / BCRC 15272 / CH1 / DL1 / V288).